A 370-amino-acid polypeptide reads, in one-letter code: MDLLKSPLYSKYVESNAKLVDFAGWEMPISFSGLIKEHESVRYSAGLFDISHMGVISIKGINPKDYIQKLFPTNLYSFCEGQGLYTVMLNDKGGIIDDLIIYDLGIQKNDISELLLIVNASRYEEDFQWIKNNLNMSEISITNFKKDKVLLALQGKNSFGLFEEWIESSISHIPNFGCEYKIFEHISPKEKIFFSKTGYTGENGLEILLSKKAAINLWDFLISKNVAPCGLGARDTLRLEAGMHLYGQDINEETSPYEAGLGWLVHLENNHEFIGRRVLEEQSRLGIQKKLVGLSIKGKAIGRKGCAVLKGDENIGTITSGSWSPTKHQAIAFAYINTSHALINNEVEILIRGKKFNGVITKRAFYKKNY.

This sequence belongs to the GcvT family. As to quaternary structure, the glycine cleavage system is composed of four proteins: P, T, L and H.

The catalysed reaction is N(6)-[(R)-S(8)-aminomethyldihydrolipoyl]-L-lysyl-[protein] + (6S)-5,6,7,8-tetrahydrofolate = N(6)-[(R)-dihydrolipoyl]-L-lysyl-[protein] + (6R)-5,10-methylene-5,6,7,8-tetrahydrofolate + NH4(+). Functionally, the glycine cleavage system catalyzes the degradation of glycine. The protein is Aminomethyltransferase of Prochlorococcus marinus (strain AS9601).